Consider the following 266-residue polypeptide: 3-methyl-2-oxobutanoate hydroxymethyltransferase (266 aa).

Mg(2+) contacts are provided by aspartate 45 and aspartate 84. Residues 45–46 (DS), aspartate 84, and lysine 112 each bind 3-methyl-2-oxobutanoate. Residue glutamate 114 coordinates Mg(2+). Glutamate 181 acts as the Proton acceptor in catalysis.

Belongs to the PanB family. In terms of assembly, homodecamer; pentamer of dimers. Requires Mg(2+) as cofactor.

It is found in the cytoplasm. The enzyme catalyses 3-methyl-2-oxobutanoate + (6R)-5,10-methylene-5,6,7,8-tetrahydrofolate + H2O = 2-dehydropantoate + (6S)-5,6,7,8-tetrahydrofolate. Its pathway is cofactor biosynthesis; (R)-pantothenate biosynthesis; (R)-pantoate from 3-methyl-2-oxobutanoate: step 1/2. Functionally, catalyzes the reversible reaction in which hydroxymethyl group from 5,10-methylenetetrahydrofolate is transferred onto alpha-ketoisovalerate to form ketopantoate. The protein is 3-methyl-2-oxobutanoate hydroxymethyltransferase of Pseudomonas fluorescens (strain Pf0-1).